The sequence spans 102 residues: Thioredoxin (102 aa).

One can recognise a Thioredoxin domain in the interval 2-102 (VTEIRSLKQL…KTKIIDLFNN (101 aa)). Residues Cys-30 and Cys-33 are joined by a disulfide bond.

This sequence belongs to the thioredoxin family.

Functionally, participates in various redox reactions through the reversible oxidation of its active center dithiol to a disulfide and catalyzes dithiol-disulfide exchange reactions. The sequence is that of Thioredoxin (trxA) from Mycoplasma genitalium (strain ATCC 33530 / DSM 19775 / NCTC 10195 / G37) (Mycoplasmoides genitalium).